The following is a 276-amino-acid chain: N-acyl homoserine lactonase AiiB (276 aa).

Residues His111, His113, His116, His191, Asp213, and His259 each contribute to the Zn(2+) site.

This sequence belongs to the metallo-beta-lactamase superfamily. Zn(2+) is required as a cofactor.

It carries out the reaction an N-acyl-L-homoserine lactone + H2O = an N-acyl-L-homoserine + H(+). In Agrobacterium fabrum (strain C58 / ATCC 33970) (Agrobacterium tumefaciens (strain C58)), this protein is N-acyl homoserine lactonase AiiB.